A 103-amino-acid chain; its full sequence is NADH-quinone oxidoreductase subunit K (103 aa).

Helical transmembrane passes span 7 to 27, 31 to 51, and 65 to 85; these read TEHGLYLAAALFILGLIGVLV, LIFMLLSLEIMLNATGLAFIV, and FMLILTLAAAEAAVALALILL.

The protein belongs to the complex I subunit 4L family. NDH-1 is composed of 14 different subunits. Subunits NuoA, H, J, K, L, M, N constitute the membrane sector of the complex.

Its subcellular location is the cell inner membrane. The enzyme catalyses a quinone + NADH + 5 H(+)(in) = a quinol + NAD(+) + 4 H(+)(out). Functionally, NDH-1 shuttles electrons from NADH, via FMN and iron-sulfur (Fe-S) centers, to quinones in the respiratory chain. The immediate electron acceptor for the enzyme in this species is believed to be ubiquinone. Couples the redox reaction to proton translocation (for every two electrons transferred, four hydrogen ions are translocated across the cytoplasmic membrane), and thus conserves the redox energy in a proton gradient. The sequence is that of NADH-quinone oxidoreductase subunit K from Nitrosococcus oceani (strain ATCC 19707 / BCRC 17464 / JCM 30415 / NCIMB 11848 / C-107).